We begin with the raw amino-acid sequence, 98 residues long: NADH-ubiquinone oxidoreductase chain 4L (98 aa).

Transmembrane regions (helical) follow at residues 1 to 21, 29 to 49, and 61 to 81; these read MTMV…GLLM, SLLC…VTIL, and IILL…LVMV.

It belongs to the complex I subunit 4L family. As to quaternary structure, core subunit of respiratory chain NADH dehydrogenase (Complex I) which is composed of 45 different subunits.

It is found in the mitochondrion inner membrane. The enzyme catalyses a ubiquinone + NADH + 5 H(+)(in) = a ubiquinol + NAD(+) + 4 H(+)(out). Functionally, core subunit of the mitochondrial membrane respiratory chain NADH dehydrogenase (Complex I) which catalyzes electron transfer from NADH through the respiratory chain, using ubiquinone as an electron acceptor. Part of the enzyme membrane arm which is embedded in the lipid bilayer and involved in proton translocation. This is NADH-ubiquinone oxidoreductase chain 4L (MT-ND4L) from Neomonachus schauinslandi (Hawaiian monk seal).